The sequence spans 306 residues: Ribosomal protein L11 methyltransferase (306 aa).

Thr-154, Gly-179, Asp-201, and Asn-242 together coordinate S-adenosyl-L-methionine.

Belongs to the methyltransferase superfamily. PrmA family.

It localises to the cytoplasm. It catalyses the reaction L-lysyl-[protein] + 3 S-adenosyl-L-methionine = N(6),N(6),N(6)-trimethyl-L-lysyl-[protein] + 3 S-adenosyl-L-homocysteine + 3 H(+). Functionally, methylates ribosomal protein L11. This chain is Ribosomal protein L11 methyltransferase, found in Xanthomonas axonopodis pv. citri (strain 306).